A 472-amino-acid polypeptide reads, in one-letter code: Gamma-aminobutyric acid receptor subunit beta-2 (472 aa).

A signal peptide spans 1-23 (RVRKKDYFGIWSFPLIIAAVCAQ). Over 24 to 239 (SVNDPSNMSL…LSLSFKLKRN (216 aa)) the chain is Extracellular. Residues Asn30 and Asn102 are each glycosylated (N-linked (GlcNAc...) asparagine). Histamine is bound at residue Tyr119. Cys158 and Cys172 are joined by a disulfide. Residues 178–179 (SY) and Thr224 contribute to the histamine site. 4-aminobutanoate-binding residues include Tyr179 and Thr224. Helical transmembrane passes span 240 to 260 (IGYF…LSWV), 271 to 290 (ARVA…NTHL), and 309 to 329 (GCFV…YIFF). Residues 287–308 (NTHLRETLPKIPYVKAIDMYLM) are etomidate binding; allosteric effector. Residues 330-450 (GRGPQRQKKA…LTDVNAIDRW (121 aa)) lie on the Cytoplasmic side of the membrane. Tyr401 carries the phosphotyrosine modification. Residues 451 to 471 (SRIFFPVVFSFFNIVYWLYYV) form a helical membrane-spanning segment.

This sequence belongs to the ligand-gated ion channel (TC 1.A.9) family. Gamma-aminobutyric acid receptor (TC 1.A.9.5) subfamily. GABRB2 sub-subfamily. As to quaternary structure, heteropentamer, formed by a combination of alpha (GABRA1-6), beta (GABRB1-3), gamma (GABRG1-3), delta (GABRD), epsilon (GABRE), rho (GABRR1-3), pi (GABRP) and theta (GABRQ) chains, each subunit exhibiting distinct physiological and pharmacological properties. Interacts with UBQLN1. May interact with KIF21B. Identified in a complex of 720 kDa composed of LHFPL4, NLGN2, GABRA1, GABRB2, GABRG2 and GABRB3. Post-translationally, glycosylated.

Its subcellular location is the postsynaptic cell membrane. It localises to the cell membrane. The protein resides in the cytoplasmic vesicle membrane. It catalyses the reaction chloride(in) = chloride(out). Its activity is regulated as follows. Allosterically activated by benzodiazepines. Allosterically activated by the anesthetic etomidate. Inhibited by the antagonist bicuculline. Potentiated by histamine. Functionally, beta subunit of the heteropentameric ligand-gated chloride channel gated by gamma-aminobutyric acid (GABA), a major inhibitory neurotransmitter in the brain. GABA-gated chloride channels, also named GABA(A) receptors (GABAAR), consist of five subunits arranged around a central pore and contain GABA active binding site(s) located at the alpha and beta subunit interface(s). When activated by GABA, GABAARs selectively allow the flow of chloride anions across the cell membrane down their electrochemical gradient. Chloride influx into the postsynaptic neuron following GABAAR opening decreases the neuron ability to generate a new action potential, thereby reducing nerve transmission. GABAARs containing alpha-1 and beta-2 or -3 subunits exhibit synaptogenic activity; the gamma-2 subunit being necessary but not sufficient to induce rapid synaptic contacts formation. Extrasynaptic beta-2 receptors contribute to the tonic GABAergic inhibition. Beta-containing GABAARs can simultaneously bind GABA and histamine where histamine binds at the interface of two neighboring beta subunits, which may be involved in the regulation of sleep and wakefulness. This is Gamma-aminobutyric acid receptor subunit beta-2 (GABRB2) from Bos taurus (Bovine).